The sequence spans 456 residues: Phosphoglucomutase/phosphomannomutase (456 aa).

Serine 101 (phosphoserine intermediate) is an active-site residue. Mg(2+)-binding residues include serine 101, aspartate 243, aspartate 245, and aspartate 247. Phosphoserine; by autocatalysis is present on serine 101.

It belongs to the phosphohexose mutase family. As to quaternary structure, homotetramer. It depends on Mg(2+) as a cofactor. Activated by phosphorylation.

The catalysed reaction is alpha-D-glucose 1-phosphate = alpha-D-glucose 6-phosphate. It carries out the reaction alpha-D-mannose 1-phosphate = D-mannose 6-phosphate. Its function is as follows. Catalyzes the interconversion of glucose 1-phosphate and glucose 6-phosphate, and the interconversion of mannose 1-phosphate and mannose 6-phosphate. Also displays low activity with deoxyribose 1-phosphate and glucosamine 1-phosphate. This Thermococcus kodakarensis (strain ATCC BAA-918 / JCM 12380 / KOD1) (Pyrococcus kodakaraensis (strain KOD1)) protein is Phosphoglucomutase/phosphomannomutase.